We begin with the raw amino-acid sequence, 141 residues long: Nucleoside diphosphate kinase (141 aa).

The ATP site is built by lysine 11, phenylalanine 59, arginine 87, threonine 93, arginine 104, and asparagine 114. Histidine 117 acts as the Pros-phosphohistidine intermediate in catalysis.

It belongs to the NDK family. As to quaternary structure, homotetramer. Mg(2+) is required as a cofactor.

The protein resides in the cytoplasm. The catalysed reaction is a 2'-deoxyribonucleoside 5'-diphosphate + ATP = a 2'-deoxyribonucleoside 5'-triphosphate + ADP. The enzyme catalyses a ribonucleoside 5'-diphosphate + ATP = a ribonucleoside 5'-triphosphate + ADP. Major role in the synthesis of nucleoside triphosphates other than ATP. The ATP gamma phosphate is transferred to the NDP beta phosphate via a ping-pong mechanism, using a phosphorylated active-site intermediate. This Nitrosomonas europaea (strain ATCC 19718 / CIP 103999 / KCTC 2705 / NBRC 14298) protein is Nucleoside diphosphate kinase.